Here is a 562-residue protein sequence, read N- to C-terminus: Efflux pump apf11 (562 aa).

2 stretches are compositionally biased toward low complexity: residues 1-10 and 18-30; these read MGDISAATKA and TPET…SSDT. A disordered region spans residues 1–36; sequence MGDISAATKAPAPPTPATPETNTTSSSSDTDVQHEP. The N-linked (GlcNAc...) asparagine glycan is linked to Asn22. The next 8 membrane-spanning stretches (helical) occupy residues 46 to 66, 83 to 103, 110 to 130, 141 to 161, 169 to 189, 200 to 220, 249 to 269, and 278 to 298; these read LVIF…TIVA, AWYG…FGKI, KLVF…CALA, AIAG…TALT, VYTA…PIIG, WCFW…VFCL, GGLA…WGGT, and IIVL…HQHW. Residue Asn312 is glycosylated (N-linked (GlcNAc...) asparagine). 6 consecutive transmembrane segments (helical) span residues 317 to 337, 356 to 376, 382 to 404, 414 to 434, 447 to 467, and 516 to 536; these read MFLL…YYLP, LAMV…AGAV, FVFF…HPSI, ILFG…VQVA, VMLV…TLFL, and FLIG…IRWI.

Belongs to the major facilitator superfamily. TCR/Tet family.

It is found in the membrane. It participates in secondary metabolite biosynthesis. In terms of biological role, efflux pump; part of the gene cluster that mediates the biosynthesis of the cyclic tetrapeptide apicidin F (APF). This chain is Efflux pump apf11 (apf11), found in Gibberella fujikuroi (strain CBS 195.34 / IMI 58289 / NRRL A-6831) (Bakanae and foot rot disease fungus).